Consider the following 213-residue polypeptide: Bcl-2-related ovarian killer protein (213 aa).

A BH4 motif is present at residues 32–44 (KALCRDYINSRLI). Residues 67–83 (VSAILLRLGDELEYIRP) carry the BH3 motif. A BH1 motif is present at residues 113–132 (QIFTAGITWGKVVSLYAVAA). Positions 165-179 (WLKRRGGWADITKCV) match the BH2 motif. Residues 190 to 210 (WLVAAVCSFGHFLKAIFFVLL) traverse the membrane as a helical segment.

This sequence belongs to the Bcl-2 family.

It localises to the membrane. Its function is as follows. May play a role in apoptosis. The chain is Bcl-2-related ovarian killer protein from Gallus gallus (Chicken).